We begin with the raw amino-acid sequence, 466 residues long: Methylenetetrahydrofolate--tRNA-(uracil-5-)-methyltransferase TrmFO (466 aa).

An FAD-binding site is contributed by 14 to 19 (GGGLAG).

It belongs to the MnmG family. TrmFO subfamily. It depends on FAD as a cofactor.

The protein localises to the cytoplasm. The enzyme catalyses uridine(54) in tRNA + (6R)-5,10-methylene-5,6,7,8-tetrahydrofolate + NADH + H(+) = 5-methyluridine(54) in tRNA + (6S)-5,6,7,8-tetrahydrofolate + NAD(+). It carries out the reaction uridine(54) in tRNA + (6R)-5,10-methylene-5,6,7,8-tetrahydrofolate + NADPH + H(+) = 5-methyluridine(54) in tRNA + (6S)-5,6,7,8-tetrahydrofolate + NADP(+). In terms of biological role, catalyzes the folate-dependent formation of 5-methyl-uridine at position 54 (M-5-U54) in all tRNAs. This chain is Methylenetetrahydrofolate--tRNA-(uracil-5-)-methyltransferase TrmFO, found in Brucella canis (strain ATCC 23365 / NCTC 10854 / RM-666).